The sequence spans 564 residues: Beta-hexosaminidase subunit B2 (564 aa).

Positions 1 to 19 (MKLKFIFLILFFIIGNSIG) are cleaved as a signal peptide. 4 N-linked (GlcNAc...) asparagine glycosylation sites follow: N43, N84, N303, and N347. The active-site Proton donor is E357. N-linked (GlcNAc...) asparagine glycosylation is found at N364, N377, N439, N524, and N551.

Belongs to the glycosyl hydrolase 20 family.

The protein resides in the lysosome. It catalyses the reaction Hydrolysis of terminal non-reducing N-acetyl-D-hexosamine residues in N-acetyl-beta-D-hexosaminides.. In terms of biological role, responsible for the degradation of GM2 gangliosides, and a variety of other molecules containing terminal N-acetyl hexosamines. This is Beta-hexosaminidase subunit B2 (hexb2) from Dictyostelium discoideum (Social amoeba).